The sequence spans 290 residues: Glutaredoxin domain-containing cysteine-rich protein 1 (290 aa).

A Glutaredoxin domain is found at 127 to 234 (LQQPSTDLEF…DILTKIERVQ (108 aa)).

The protein belongs to the GRXCR1 family. In terms of tissue distribution, expressed at low levels in adult lung, brain and duodenum with moderate levels in testis. Highly expressed in fetal cochlea.

It is found in the cell projection. It localises to the stereocilium. The protein resides in the microvillus. The protein localises to the kinocilium. May play a role in actin filament architecture in developing stereocilia of sensory cells. The polypeptide is Glutaredoxin domain-containing cysteine-rich protein 1 (GRXCR1) (Homo sapiens (Human)).